The following is a 221-amino-acid chain: 2-amino-5-formylamino-6-ribosylaminopyrimidin-4(3H)-one 5'-monophosphate deformylase (221 aa).

4 residues coordinate Fe cation: E29, H31, D40, and H108.

The protein belongs to the creatininase superfamily. FAPy deformylase family. Homodimer. Requires Fe(2+) as cofactor. Zn(2+) is required as a cofactor.

The enzyme catalyses 2-amino-5-formylamino-6-(5-phospho-D-ribosylamino)pyrimidin-4(3H)-one + H2O = 2,5-diamino-6-(1-D-ribosylamino)pyrimidin-4(3H)-one 5'-phosphate + formate + H(+). The protein operates within cofactor biosynthesis; coenzyme F420 biosynthesis. Its pathway is cofactor biosynthesis; riboflavin biosynthesis. Catalyzes the hydrolysis of the formamide of 2-amino-5-formylamino-6-ribosylamino-4(3H)-pyrimidinone 5'-monophosphate (FAPy) to form 2,5-diamino-6-ribosylamino-4(3H)-pyrimidinone 5'-phosphate (APy). The sequence is that of 2-amino-5-formylamino-6-ribosylaminopyrimidin-4(3H)-one 5'-monophosphate deformylase from Methanococcus maripaludis (strain C7 / ATCC BAA-1331).